Consider the following 595-residue polypeptide: Merlin (595 aa).

Serine 13 is modified (phosphoserine). Positions 22 to 311 (FTVRIVTMDA…GNHDLFMRRR (290 aa)) constitute an FERM domain. Serine 518 carries the post-translational modification Phosphoserine; by PAK.

In terms of assembly, interacts with NHERF1, HGS and AGAP2. Interacts with SGSM3. Interacts (via FERM domain) with MPP1. Interacts with LAYN and WWC1. Interacts with the CUL4A-RBX1-DDB1-VprBP/DCAF1 E3 ubiquitin-protein ligase complex. The unphosphorylated form interacts (via FERM domain) with VPRBP/DCAF1. Interacts (via FERM domain) with NOP53; the interaction is direct. Interacts with SCHIP1; the interaction is direct. Post-translationally, phosphorylation of Ser-518 inhibits nuclear localization by disrupting the intramolecular association of the FERM domain with the C-terminal tail. In terms of processing, ubiquitinated by the CUL4A-RBX1-DDB1-DCAF1/VprBP E3 ubiquitin-protein ligase complex for ubiquitination and subsequent proteasome-dependent degradation. Phosphorylation of Ser-518 inhibits nuclear localization by disrupting the intramolecular association of the FERM domain with the C-terminal tail. The dephosphorylation of Ser-518 favors the interaction with NOP53.

Its subcellular location is the cell membrane. It localises to the cell projection. It is found in the cytoplasm. The protein resides in the cytoskeleton. The protein localises to the nucleus. Probable regulator of the Hippo/SWH (Sav/Wts/Hpo) signaling pathway, a signaling pathway that plays a pivotal role in tumor suppression by restricting proliferation and promoting apoptosis. Along with WWC1 can synergistically induce the phosphorylation of LATS1 and LATS2 and can probably function in the regulation of the Hippo/SWH (Sav/Wts/Hpo) signaling pathway. May act as a membrane stabilizing protein. May inhibit PI3 kinase by binding to AGAP2 and impairing its stimulating activity. Suppresses cell proliferation and tumorigenesis by inhibiting the CUL4A-RBX1-DDB1-VprBP/DCAF1 E3 ubiquitin-protein ligase complex. This Papio anubis (Olive baboon) protein is Merlin (NF2).